A 345-amino-acid chain; its full sequence is Uroporphyrinogen decarboxylase (345 aa).

Substrate contacts are provided by residues 28–32, aspartate 77, tyrosine 153, serine 208, and histidine 322; that span reads RQAGR.

It belongs to the uroporphyrinogen decarboxylase family. As to quaternary structure, homodimer.

The protein resides in the cytoplasm. It catalyses the reaction uroporphyrinogen III + 4 H(+) = coproporphyrinogen III + 4 CO2. It functions in the pathway porphyrin-containing compound metabolism; protoporphyrin-IX biosynthesis; coproporphyrinogen-III from 5-aminolevulinate: step 4/4. Catalyzes the decarboxylation of four acetate groups of uroporphyrinogen-III to yield coproporphyrinogen-III. The sequence is that of Uroporphyrinogen decarboxylase from Solibacter usitatus (strain Ellin6076).